We begin with the raw amino-acid sequence, 317 residues long: Porphobilinogen deaminase (317 aa).

An S-(dipyrrolylmethanemethyl)cysteine modification is found at C245.

It belongs to the HMBS family. Monomer. It depends on dipyrromethane as a cofactor.

It carries out the reaction 4 porphobilinogen + H2O = hydroxymethylbilane + 4 NH4(+). It participates in porphyrin-containing compound metabolism; protoporphyrin-IX biosynthesis; coproporphyrinogen-III from 5-aminolevulinate: step 2/4. Its pathway is porphyrin-containing compound metabolism; chlorophyll biosynthesis. Tetrapolymerization of the monopyrrole PBG into the hydroxymethylbilane pre-uroporphyrinogen in several discrete steps. This is Porphobilinogen deaminase from Synechococcus sp. (strain CC9605).